A 202-amino-acid chain; its full sequence is Putative 5'(3')-deoxyribonucleotidase (202 aa).

Catalysis depends on Asp22, which acts as the Nucleophile. Mg(2+) is bound by residues Asp22, Asp24, and Asp156. Residue Asp24 is the Proton donor of the active site.

It belongs to the 5'(3')-deoxyribonucleotidase family. The cofactor is Mg(2+).

Its function is as follows. Dephosphorylates the 5' and 2'(3')-phosphates of deoxyribonucleotides. This chain is Putative 5'(3')-deoxyribonucleotidase, found in Chlorobaculum tepidum (strain ATCC 49652 / DSM 12025 / NBRC 103806 / TLS) (Chlorobium tepidum).